Here is an 86-residue protein sequence, read N- to C-terminus: MDPFLIKLIGFAAATCTTVAYAPQFIKVLKTRSARDISLGMFLVMVLGLALWLIYGLLSGDAPLIASNAVTMLLAGGILVMKLRYG.

The next 3 membrane-spanning stretches (helical) occupy residues 3–23, 37–57, and 61–81; these read PFLI…AYAP, ISLG…IYGL, and DAPL…ILVM. The PQ-loop domain occupies 6-63; that stretch reads IKLIGFAAATCTTVAYAPQFIKVLKTRSARDISLGMFLVMVLGLALWLIYGLLSGDAP.

As to quaternary structure, homodimer. Homooligomer.

The protein resides in the cell membrane. Mediates sucrose transmembrane transport down a concentration gradient. In Bradyrhizobium diazoefficiens (strain JCM 10833 / BCRC 13528 / IAM 13628 / NBRC 14792 / USDA 110), this protein is Sugar transporter SemiSWEET.